The following is a 271-amino-acid chain: Imidazole glycerol phosphate synthase subunit HisF (271 aa).

Catalysis depends on residues Asp12 and Asp136.

Belongs to the HisA/HisF family. Heterodimer of HisH and HisF.

The protein resides in the cytoplasm. The enzyme catalyses 5-[(5-phospho-1-deoxy-D-ribulos-1-ylimino)methylamino]-1-(5-phospho-beta-D-ribosyl)imidazole-4-carboxamide + L-glutamine = D-erythro-1-(imidazol-4-yl)glycerol 3-phosphate + 5-amino-1-(5-phospho-beta-D-ribosyl)imidazole-4-carboxamide + L-glutamate + H(+). Its pathway is amino-acid biosynthesis; L-histidine biosynthesis; L-histidine from 5-phospho-alpha-D-ribose 1-diphosphate: step 5/9. Functionally, IGPS catalyzes the conversion of PRFAR and glutamine to IGP, AICAR and glutamate. The HisF subunit catalyzes the cyclization activity that produces IGP and AICAR from PRFAR using the ammonia provided by the HisH subunit. In Haloarcula marismortui (strain ATCC 43049 / DSM 3752 / JCM 8966 / VKM B-1809) (Halobacterium marismortui), this protein is Imidazole glycerol phosphate synthase subunit HisF.